We begin with the raw amino-acid sequence, 149 residues long: MHCPFCSATDTKVIDSRLVSDGHQVRRRRQCLACSERFTTFESAELVMPKVIKSNGNREPFDEDKLSGGLYRSLEKRPVSADLVELALNTIKSQLRATGEREVPSDMIGNLVMDQLKELDKVAYIRFASVYRSFEDIKEFGEEIAKLEK.

A zinc finger spans residues 3 to 34; it reads CPFCSATDTKVIDSRLVSDGHQVRRRRQCLAC. Residues 49-139 form the ATP-cone domain; that stretch reads PKVIKSNGNR…VYRSFEDIKE (91 aa).

The protein belongs to the NrdR family. It depends on Zn(2+) as a cofactor.

Its function is as follows. Negatively regulates transcription of bacterial ribonucleotide reductase nrd genes and operons by binding to NrdR-boxes. This is Transcriptional repressor NrdR from Aliivibrio fischeri (strain ATCC 700601 / ES114) (Vibrio fischeri).